We begin with the raw amino-acid sequence, 89 residues long: Small ribosomal subunit protein bS20 (89 aa).

Residues 1 to 26 (MANSAQARKRARQADGQRSHNASLRS) form a disordered region.

The protein belongs to the bacterial ribosomal protein bS20 family.

Its function is as follows. Binds directly to 16S ribosomal RNA. This chain is Small ribosomal subunit protein bS20, found in Dechloromonas aromatica (strain RCB).